Reading from the N-terminus, the 318-residue chain is tRNA pseudouridine synthase B (318 aa).

Catalysis depends on D47, which acts as the Nucleophile.

It belongs to the pseudouridine synthase TruB family. Type 1 subfamily.

It carries out the reaction uridine(55) in tRNA = pseudouridine(55) in tRNA. Functionally, responsible for synthesis of pseudouridine from uracil-55 in the psi GC loop of transfer RNAs. In Shewanella putrefaciens (strain CN-32 / ATCC BAA-453), this protein is tRNA pseudouridine synthase B.